We begin with the raw amino-acid sequence, 268 residues long: Ubiquinone biosynthesis protein COQ4 homolog, mitochondrial (268 aa).

The Zn(2+) site is built by histidine 171, aspartate 172, histidine 175, and glutamate 187.

This sequence belongs to the COQ4 family. Component of a multi-subunit COQ enzyme complex. Zn(2+) is required as a cofactor.

It localises to the mitochondrion inner membrane. The catalysed reaction is a 4-hydroxy-3-methoxy-5-(all-trans-polyprenyl)benzoate + H(+) = a 2-methoxy-6-(all-trans-polyprenyl)phenol + CO2. It participates in cofactor biosynthesis; ubiquinone biosynthesis. Functionally, lyase that catalyzes the C1-decarboxylation of 4-hydroxy-3-methoxy-5-(all-trans-polyprenyl)benzoic acid into 2-methoxy-6-(all-trans-polyprenyl)phenol during ubiquinone biosynthesis. In Drosophila melanogaster (Fruit fly), this protein is Ubiquinone biosynthesis protein COQ4 homolog, mitochondrial.